The primary structure comprises 123 residues: Small ribosomal subunit protein uS13 (123 aa).

The protein belongs to the universal ribosomal protein uS13 family. As to quaternary structure, part of the 30S ribosomal subunit. Forms a loose heterodimer with protein S19. Forms two bridges to the 50S subunit in the 70S ribosome.

Located at the top of the head of the 30S subunit, it contacts several helices of the 16S rRNA. In the 70S ribosome it contacts the 23S rRNA (bridge B1a) and protein L5 of the 50S subunit (bridge B1b), connecting the 2 subunits; these bridges are implicated in subunit movement. Contacts the tRNAs in the A and P-sites. This chain is Small ribosomal subunit protein uS13, found in Neorickettsia sennetsu (strain ATCC VR-367 / Miyayama) (Ehrlichia sennetsu).